The following is a 297-amino-acid chain: tRNA dimethylallyltransferase (297 aa).

Residue 15-22 (GPTASGKS) coordinates ATP. 17–22 (TASGKS) contacts substrate. Interaction with substrate tRNA stretches follow at residues 40–43 (DSMQ) and 164–168 (QRIVR).

It belongs to the IPP transferase family. In terms of assembly, monomer. The cofactor is Mg(2+).

The catalysed reaction is adenosine(37) in tRNA + dimethylallyl diphosphate = N(6)-dimethylallyladenosine(37) in tRNA + diphosphate. Its function is as follows. Catalyzes the transfer of a dimethylallyl group onto the adenine at position 37 in tRNAs that read codons beginning with uridine, leading to the formation of N6-(dimethylallyl)adenosine (i(6)A). The polypeptide is tRNA dimethylallyltransferase (Rhizobium etli (strain CIAT 652)).